Consider the following 277-residue polypeptide: MGQKINPHGFRLGITTDWKSRWYADKQYADYVKEDVAIRRLLATGLERAGIAKVEIERTRDRVRVDIHTARPGIVIGRRGTEADRIRADLEKLTGKQVQLNILEVKNPEAEAQLVAQGVAEQLSNRVAFRRAMRKAIQSAMRQPNVKGIRVQCSGRLGGAEMSRSEFYREGRVPLHTLRADIDYGLYEAKTTFGRIGVKVWIYKGDIVGGKRELAAAGVEAGRGAPDRPRRERPAGTRPRRSGSSGTTATSTEAGRAAAETPASDGASAPSAETTES.

One can recognise a KH type-2 domain in the interval 38–106 (IRRLLATGLE…QVQLNILEVK (69 aa)). Residues 217–277 (AGVEAGRGAP…SAPSAETTES (61 aa)) form a disordered region. The segment covering 225–235 (APDRPRRERPA) has biased composition (basic and acidic residues). A compositionally biased stretch (low complexity) spans 242–261 (SGSSGTTATSTEAGRAAAET).

Belongs to the universal ribosomal protein uS3 family. As to quaternary structure, part of the 30S ribosomal subunit. Forms a tight complex with proteins S10 and S14.

In terms of biological role, binds the lower part of the 30S subunit head. Binds mRNA in the 70S ribosome, positioning it for translation. The sequence is that of Small ribosomal subunit protein uS3 from Mycobacteroides abscessus (strain ATCC 19977 / DSM 44196 / CCUG 20993 / CIP 104536 / JCM 13569 / NCTC 13031 / TMC 1543 / L948) (Mycobacterium abscessus).